Consider the following 201-residue polypeptide: METEQDEMGQEEMSPEMALDKDPFQLTVEDVYDISHVVGQDLLKINREARGVSSLVSDLQFKIVRVLEMLEALVNQSSLSAEELKMERDNLKAEVDRLLRDGPQMGVGPDKMVIDLTDPNRPRFTLQELRDVLQERNKLKVQLLVAQDELQCYKSGIIPSPDDQIVTLENESIITSSPRSNASKEKSTVKSLFSFKQGKNT.

The RH1 domain maps to 14 to 108 (SPEMALDKDP…LRDGPQMGVG (95 aa)). The stretch at 67-155 (LEMLEALVNQ…AQDELQCYKS (89 aa)) forms a coiled coil. An RH2 domain is found at 121–197 (RPRFTLQELR…TVKSLFSFKQ (77 aa)). Positions 175–201 (TSSPRSNASKEKSTVKSLFSFKQGKNT) are disordered.

The protein belongs to the RILPL family.

The protein localises to the cytoplasm. The protein resides in the cytosol. It localises to the cytoskeleton. Its subcellular location is the microtubule organizing center. It is found in the centrosome. The protein localises to the cell projection. The protein resides in the cilium. Its function is as follows. Involved in cell shape and neuronal morphogenesis, positively regulating the establishment and maintenance of dendritic spines. Plays a role in cellular protein transport. This chain is RILP-like protein 2 (rilpl2), found in Xenopus laevis (African clawed frog).